The sequence spans 130 residues: Small ribosomal subunit protein uS8 (130 aa).

It belongs to the universal ribosomal protein uS8 family. Component of the small ribosomal subunit (SSU). Mature N.crassa ribosomes consist of a small (40S) and a large (60S) subunit. The 40S small subunit contains 1 molecule of ribosomal RNA (18S rRNA) and at least 32 different proteins. The large 60S subunit contains 3 rRNA molecules (26S, 5.8S and 5S rRNA) and at least 42 different proteins.

The protein resides in the cytoplasm. Component of the ribosome, a large ribonucleoprotein complex responsible for the synthesis of proteins in the cell. The small ribosomal subunit (SSU) binds messenger RNAs (mRNAs) and translates the encoded message by selecting cognate aminoacyl-transfer RNA (tRNA) molecules. The large subunit (LSU) contains the ribosomal catalytic site termed the peptidyl transferase center (PTC), which catalyzes the formation of peptide bonds, thereby polymerizing the amino acids delivered by tRNAs into a polypeptide chain. The nascent polypeptides leave the ribosome through a tunnel in the LSU and interact with protein factors that function in enzymatic processing, targeting, and the membrane insertion of nascent chains at the exit of the ribosomal tunnel. The protein is Small ribosomal subunit protein uS8 (crp-27) of Neurospora crassa (strain ATCC 24698 / 74-OR23-1A / CBS 708.71 / DSM 1257 / FGSC 987).